A 348-amino-acid polypeptide reads, in one-letter code: Terpene cyclase ctvD (348 aa).

The chain crosses the membrane as a helical span at residues 2–22 (ALSAYFLLCLSVLGLDAIYGF). Asn-51 carries N-linked (GlcNAc...) asparagine glycosylation. Transmembrane regions (helical) follow at residues 77 to 97 (PGLS…WVAI), 116 to 136 (LFAM…WCAI), 161 to 181 (LIPI…LLPE), 191 to 211 (QIAI…HWGL), 235 to 255 (FAFV…LTLI), 283 to 303 (GLWF…LWAM), and 323 to 343 (LKVG…WLLW).

Belongs to the membrane-bound ascI terpene cyclase family.

The protein resides in the membrane. It participates in mycotoxin biosynthesis. Its function is as follows. Hydrolase; part of the gene cluster that mediates the biosynthesis of citreoviridin, an inhibitor of the of F1-ATPase beta-subunit. The HR-PKS ctvA accepts acetyl-CoA as the starter unit and catalyzes eight iterations of malonyl-CoA extension and four iterations of SAM-dependent methylation at C4, C12, C14, and C16. The KR and DH domains selectively act on the first six iterations to generate the hexaene chain. In the last three iterations, the KR and DH domains terminate their functions to yield a beta,delta-diketo ester moiety, which then undergoes intramolecular cyclization to yield an alpha-pyrone intermediate. Subsequently, ctvB methylates the alpha-pyrone hydroxyl group to generate citreomontanin. In order to form the tetrahydrofuran ring with the correct stereochemistry, the terminal alkenes of citreomontanin need to undergo isomerization to yield a (17Z)-hexaene, a step that could be catalyzed by ctvC. The (17Z)-hexaene then undergoes bisepoxidation by ctvC to form a (17R,16R,15S,14R)-bisepoxide moiety. Lastly, ctvD acts as a regioselective hydrolase to form the tetrahydrofuran ring with the substituents in the correct absolute configuration, completing the biosynthesis of citreoviridin. The chain is Terpene cyclase ctvD from Aspergillus terreus (strain NIH 2624 / FGSC A1156).